A 443-amino-acid chain; its full sequence is Serine/threonine-protein phosphatase 2A 55 kDa regulatory subunit B beta isoform (443 aa).

4 WD repeats span residues 22–61, 87–128, 171–209, and 220–260; these read TEAD…KNQV, EIEE…KRPE, AHTY…QSFN, and ELTE…LCDR. Position 275 is a phosphoserine (Ser275). WD repeat units follow at residues 279-317, 334-375, and 410-442; these read EIIS…RPIE, ENDC…DVTL, and DFSK…QDKV. Residue Tyr295 is modified to Phosphotyrosine. Position 298 is a phosphothreonine (Thr298).

Belongs to the phosphatase 2A regulatory subunit B family. In terms of assembly, PP2A consists of a common heterodimeric core enzyme, composed of a 36 kDa catalytic subunit (subunit C) and a 65 kDa constant regulatory subunit (PR65 or subunit A), that associates with a variety of regulatory subunits. Proteins that associate with the core dimer include three families of regulatory subunits B (the R2/B/PR55/B55, R3/B''/PR72/PR130/PR59 and R5/B'/B56 families), the 48 kDa variable regulatory subunit, viral proteins, and cell signaling molecules. Interacts with TOMM22. Interacts with IER5 (via N- and C-terminal regions).

Its subcellular location is the cytoplasm. The protein resides in the cytoskeleton. It is found in the membrane. In terms of biological role, the B regulatory subunit might modulate substrate selectivity and catalytic activity, and might also direct the localization of the catalytic enzyme to a particular subcellular compartment. This is Serine/threonine-protein phosphatase 2A 55 kDa regulatory subunit B beta isoform (PPP2R2B) from Bos taurus (Bovine).